Here is a 328-residue protein sequence, read N- to C-terminus: Biotin synthase (328 aa).

The 228-residue stretch at phenylalanine 50–arginine 277 folds into the Radical SAM core domain. The [4Fe-4S] cluster site is built by cysteine 67, cysteine 71, and cysteine 74. Residues serine 111, cysteine 142, and cysteine 202 each contribute to the [2Fe-2S] cluster site.

It belongs to the radical SAM superfamily. Biotin synthase family. In terms of assembly, homodimer. [4Fe-4S] cluster is required as a cofactor. [2Fe-2S] cluster serves as cofactor.

It carries out the reaction (4R,5S)-dethiobiotin + (sulfur carrier)-SH + 2 reduced [2Fe-2S]-[ferredoxin] + 2 S-adenosyl-L-methionine = (sulfur carrier)-H + biotin + 2 5'-deoxyadenosine + 2 L-methionine + 2 oxidized [2Fe-2S]-[ferredoxin]. Its pathway is cofactor biosynthesis; biotin biosynthesis; biotin from 7,8-diaminononanoate: step 2/2. Its function is as follows. Catalyzes the conversion of dethiobiotin (DTB) to biotin by the insertion of a sulfur atom into dethiobiotin via a radical-based mechanism. The sequence is that of Biotin synthase from Desulfatibacillum aliphaticivorans.